The sequence spans 198 residues: FMN-dependent NADH:quinone oxidoreductase (198 aa).

92–95 (MWNL) serves as a coordination point for FMN.

This sequence belongs to the azoreductase type 1 family. Homodimer. FMN is required as a cofactor.

It carries out the reaction 2 a quinone + NADH + H(+) = 2 a 1,4-benzosemiquinone + NAD(+). The enzyme catalyses N,N-dimethyl-1,4-phenylenediamine + anthranilate + 2 NAD(+) = 2-(4-dimethylaminophenyl)diazenylbenzoate + 2 NADH + 2 H(+). Its function is as follows. Quinone reductase that provides resistance to thiol-specific stress caused by electrophilic quinones. In terms of biological role, also exhibits azoreductase activity. Catalyzes the reductive cleavage of the azo bond in aromatic azo compounds to the corresponding amines. In Clostridium beijerinckii (strain ATCC 51743 / NCIMB 8052) (Clostridium acetobutylicum), this protein is FMN-dependent NADH:quinone oxidoreductase.